A 365-amino-acid chain; its full sequence is tRNA N6-adenosine threonylcarbamoyltransferase (365 aa).

Residues His111 and His115 each coordinate Fe cation. Residues 140-144 (IVSGG), Asp173, Gly186, and Asn298 each bind substrate. Residue Asp323 participates in Fe cation binding.

It belongs to the KAE1 / TsaD family. Fe(2+) is required as a cofactor.

It localises to the cytoplasm. It catalyses the reaction L-threonylcarbamoyladenylate + adenosine(37) in tRNA = N(6)-L-threonylcarbamoyladenosine(37) in tRNA + AMP + H(+). Its function is as follows. Required for the formation of a threonylcarbamoyl group on adenosine at position 37 (t(6)A37) in tRNAs that read codons beginning with adenine. Is involved in the transfer of the threonylcarbamoyl moiety of threonylcarbamoyl-AMP (TC-AMP) to the N6 group of A37, together with TsaE and TsaB. TsaD likely plays a direct catalytic role in this reaction. The chain is tRNA N6-adenosine threonylcarbamoyltransferase from Thermomicrobium roseum (strain ATCC 27502 / DSM 5159 / P-2).